The sequence spans 180 residues: UPF0303 protein PSEEN3311 (180 aa).

The protein belongs to the UPF0303 family.

The protein is UPF0303 protein PSEEN3311 of Pseudomonas entomophila (strain L48).